A 276-amino-acid chain; its full sequence is Large ribosomal subunit protein uL2 (276 aa).

A disordered region spans residues 223–276 (AVMNPVDHPHGGGEGKNSVGRKSPLTPWGKPALGIKTRGRKTSDKFIVRRRNEK). Residues 263 to 276 (KTSDKFIVRRRNEK) are compositionally biased toward basic and acidic residues.

This sequence belongs to the universal ribosomal protein uL2 family. As to quaternary structure, part of the 50S ribosomal subunit. Forms a bridge to the 30S subunit in the 70S ribosome.

In terms of biological role, one of the primary rRNA binding proteins. Required for association of the 30S and 50S subunits to form the 70S ribosome, for tRNA binding and peptide bond formation. It has been suggested to have peptidyltransferase activity; this is somewhat controversial. Makes several contacts with the 16S rRNA in the 70S ribosome. This is Large ribosomal subunit protein uL2 from Fusobacterium nucleatum subsp. nucleatum (strain ATCC 25586 / DSM 15643 / BCRC 10681 / CIP 101130 / JCM 8532 / KCTC 2640 / LMG 13131 / VPI 4355).